The primary structure comprises 315 residues: DNA-directed RNA polymerase subunit alpha (315 aa).

The tract at residues 1–228 is alpha N-terminal domain (alpha-NTD); the sequence is MIEMEKPKVE…EHLNLFITLK (228 aa). Residues 245 to 315 form an alpha C-terminal domain (alpha-CTD) region; it reads KEKVLEMTIE…LGLGLRPSDE (71 aa).

It belongs to the RNA polymerase alpha chain family. As to quaternary structure, homodimer. The RNAP catalytic core consists of 2 alpha, 1 beta, 1 beta' and 1 omega subunit. When a sigma factor is associated with the core the holoenzyme is formed, which can initiate transcription.

It carries out the reaction RNA(n) + a ribonucleoside 5'-triphosphate = RNA(n+1) + diphosphate. Its function is as follows. DNA-dependent RNA polymerase catalyzes the transcription of DNA into RNA using the four ribonucleoside triphosphates as substrates. This Alkaliphilus metalliredigens (strain QYMF) protein is DNA-directed RNA polymerase subunit alpha.